The following is a 707-amino-acid chain: Pheromone-processing carboxypeptidase KEX1 (707 aa).

A signal peptide spans 1 to 17 (MLLSVFIILINTLFVLA). Over 18-564 (IPPKEGSDNN…EESTSSKFTR (547 aa)) the chain is Lumenal. 2 N-linked (GlcNAc...) asparagine glycosylation sites follow: Asn64 and Asn121. Residue Ser183 is part of the active site. 2 N-linked (GlcNAc...) asparagine glycosylation sites follow: Asn293 and Asn378. Asp393 is an active-site residue. 2 N-linked (GlcNAc...) asparagine glycosylation sites follow: Asn440 and Asn448. His451 is a catalytic residue. The segment at 496 to 557 (GQEIPADESS…ASFIPEPEES (62 aa)) is disordered. Basic and acidic residues predominate over residues 503–533 (ESSKPIEDKPDDKPIEDKPEETKPEQTKPED). The span at 536-549 (SSSTSEIIPTSEAS) shows a compositional bias: low complexity. The chain crosses the membrane as a helical span at residues 565–585 (LIQLGVIFIIFWGVYILYVSY). At 586-707 (RARPSSIIKK…GNPKKTESKS (122 aa)) the chain is on the cytoplasmic side. The interval 644–707 (NTSNRGRYAP…GNPKKTESKS (64 aa)) is disordered. Acidic residues predominate over residues 683–694 (SDDDEDDDEDVE). Positions 695-707 (THEGNPKKTESKS) are enriched in basic and acidic residues.

It belongs to the peptidase S10 family.

The protein localises to the golgi apparatus. It is found in the trans-Golgi network membrane. The enzyme catalyses Preferential release of a C-terminal arginine or lysine residue.. In terms of biological role, protease with a carboxypeptidase B-like function involved in the C-terminal processing of the lysine and arginine residues from protein precursors. Promotes cell fusion and is involved in the programmed cell death. This is Pheromone-processing carboxypeptidase KEX1 (KEX1) from Candida tropicalis (strain ATCC MYA-3404 / T1) (Yeast).